Reading from the N-terminus, the 608-residue chain is Aspartate--tRNA(Asp/Asn) ligase (608 aa).

Glu175 lines the L-aspartate pocket. Residues 199–202 (QLFK) are aspartate. An L-aspartate-binding site is contributed by Arg221. ATP is bound by residues 221–223 (RDE) and Gln230. An L-aspartate-binding site is contributed by His453. Residue Glu487 participates in ATP binding. Arg494 provides a ligand contact to L-aspartate. Residue 539 to 542 (GWDR) coordinates ATP. Residues 566–608 (IDPLTDAPAAITPQQRKEAGIDAKPKPKAEAQAEAQAEESAEK) are disordered. Residues 580–596 (QRKEAGIDAKPKPKAEA) are compositionally biased toward basic and acidic residues.

It belongs to the class-II aminoacyl-tRNA synthetase family. Type 1 subfamily. Homodimer.

Its subcellular location is the cytoplasm. The catalysed reaction is tRNA(Asx) + L-aspartate + ATP = L-aspartyl-tRNA(Asx) + AMP + diphosphate. In terms of biological role, aspartyl-tRNA synthetase with relaxed tRNA specificity since it is able to aspartylate not only its cognate tRNA(Asp) but also tRNA(Asn). Reaction proceeds in two steps: L-aspartate is first activated by ATP to form Asp-AMP and then transferred to the acceptor end of tRNA(Asp/Asn). The chain is Aspartate--tRNA(Asp/Asn) ligase from Corynebacterium glutamicum (strain ATCC 13032 / DSM 20300 / JCM 1318 / BCRC 11384 / CCUG 27702 / LMG 3730 / NBRC 12168 / NCIMB 10025 / NRRL B-2784 / 534).